The primary structure comprises 401 residues: E3 ubiquitin-protein ligase NHLRC1 (401 aa).

The segment at 28–74 (CKVCFERFGHWQQRRPRNLPCGHVVCLACVAALAHPRTLGLECPFCR) adopts an RING-type zinc-finger fold. 6 NHL repeats span residues 115–159 (TLTC…FDSG), 163–206 (AHQF…FDFF), 207–247 (GQIK…LEAD), 250–303 (EGVL…FNST), 304–352 (MQLI…LGKP), and 353–396 (EEFP…FKVM).

Interacts with AGL. Interacts (via the NHL repeats) with EPM2A/laforin. Forms a complex with EPM2A/laforin and HSP70. Interacts with PRDM8.

It localises to the endoplasmic reticulum. It is found in the nucleus. It catalyses the reaction S-ubiquitinyl-[E2 ubiquitin-conjugating enzyme]-L-cysteine + [acceptor protein]-L-lysine = [E2 ubiquitin-conjugating enzyme]-L-cysteine + N(6)-ubiquitinyl-[acceptor protein]-L-lysine.. Its pathway is protein modification; protein ubiquitination. Its function is as follows. E3 ubiquitin-protein ligase. Together with the phosphatase EPM2A/laforin, appears to be involved in the clearance of toxic polyglucosan and protein aggregates via multiple pathways. In complex with EPM2A/laforin and HSP70, suppresses the cellular toxicity of misfolded proteins by promoting their degradation through the ubiquitin-proteasome system (UPS). Ubiquitinates the glycogen-targeting protein phosphatase subunits PPP1R3C/PTG and PPP1R3D in a laforin-dependent manner and targets them for proteasome-dependent degradation, thus decreasing glycogen accumulation. Polyubiquitinates EPM2A/laforin and ubiquitinates AGL and targets them for proteasome-dependent degradation. Also promotes proteasome-independent protein degradation through the macroautophagy pathway. The sequence is that of E3 ubiquitin-protein ligase NHLRC1 (Nhlrc1) from Mus musculus (Mouse).